Consider the following 156-residue polypeptide: SsrA-binding protein (156 aa).

The protein belongs to the SmpB family.

It is found in the cytoplasm. Required for rescue of stalled ribosomes mediated by trans-translation. Binds to transfer-messenger RNA (tmRNA), required for stable association of tmRNA with ribosomes. tmRNA and SmpB together mimic tRNA shape, replacing the anticodon stem-loop with SmpB. tmRNA is encoded by the ssrA gene; the 2 termini fold to resemble tRNA(Ala) and it encodes a 'tag peptide', a short internal open reading frame. During trans-translation Ala-aminoacylated tmRNA acts like a tRNA, entering the A-site of stalled ribosomes, displacing the stalled mRNA. The ribosome then switches to translate the ORF on the tmRNA; the nascent peptide is terminated with the 'tag peptide' encoded by the tmRNA and targeted for degradation. The ribosome is freed to recommence translation, which seems to be the essential function of trans-translation. This is SsrA-binding protein from Staphylococcus haemolyticus (strain JCSC1435).